The sequence spans 543 residues: Ribonuclease Y (543 aa).

A helical membrane pass occupies residues 4-24; it reads IIMIPVATAIVSLLVGTVTGY. One can recognise a KH domain in the interval 233-296; it reads TVSVVDLPNE…EIAKRAMERL (64 aa). The 94-residue stretch at 359-452 folds into the HD domain; it reads VLSHSIEVGK…VVAADTISSA (94 aa).

This sequence belongs to the RNase Y family.

It is found in the cell membrane. In terms of biological role, endoribonuclease that initiates mRNA decay. This is Ribonuclease Y from Lactobacillus acidophilus (strain ATCC 700396 / NCK56 / N2 / NCFM).